Consider the following 83-residue polypeptide: Prolactin-releasing peptide (83 aa).

A signal peptide spans 1–21 (MALKTWLLCLLLLSLVLPGAS). Position 52 is a phenylalanine amide (phenylalanine 52). Residues 57 to 83 (ATPRDVTGLGQLSCLPLDGRTKFSQRG) constitute a propeptide that is removed on maturation.

As to expression, widely expressed, with highest levels in medulla oblongata and hypothalamus.

The protein localises to the secreted. Its function is as follows. Stimulates prolactin (PRL) release and regulates the expression of prolactin through its receptor GPR10. May stimulate lactotrophs directly to secrete PRL. The chain is Prolactin-releasing peptide (Prlh) from Rattus norvegicus (Rat).